The following is a 335-amino-acid chain: Delta(7)-sterol 5(6)-desaturase erg3B (335 aa).

The next 3 helical transmembrane spans lie at isoleucine 74–phenylalanine 94, isoleucine 113–alanine 133, and leucine 152–isoleucine 172. The region spanning leucine 160 to glycine 284 is the Fatty acid hydroxylase domain. Positions histidine 173–histidine 177 match the Histidine box-1 motif. The short motif at histidine 186 to histidine 190 is the Histidine box-2 element. Residues proline 219–tryptophan 239 traverse the membrane as a helical segment. A glycan (N-linked (GlcNAc...) asparagine) is linked at asparagine 256. The Histidine box-3 motif lies at histidine 261–histidine 265.

This sequence belongs to the sterol desaturase family. It depends on Fe cation as a cofactor.

The protein resides in the endoplasmic reticulum membrane. It functions in the pathway steroid metabolism; ergosterol biosynthesis. Its function is as follows. Delta(7)-sterol 5(6)-desaturase; part of the third module of ergosterol biosynthesis pathway that includes the late steps of the pathway. Erg3B catalyzes the introduction of a C-5 double bond in the B ring to produce 5-dehydroepisterol. The third module or late pathway involves the ergosterol synthesis itself through consecutive reactions that mainly occur in the endoplasmic reticulum (ER) membrane. Firstly, the squalene synthase erg9 catalyzes the condensation of 2 farnesyl pyrophosphate moieties to form squalene, which is the precursor of all steroids. Squalene synthase is crucial for balancing the incorporation of farnesyl diphosphate (FPP) into sterol and nonsterol isoprene synthesis. Secondly, squalene is converted into lanosterol by the consecutive action of the squalene epoxidase erg1 and the lanosterol synthase erg7. Then, the delta(24)-sterol C-methyltransferase erg6 methylates lanosterol at C-24 to produce eburicol. Eburicol is the substrate of the sterol 14-alpha demethylase encoded by cyp51A and cyp51B, to yield 4,4,24-trimethyl ergosta-8,14,24(28)-trienol. The C-14 reductase erg24 then reduces the C14=C15 double bond which leads to 4,4-dimethylfecosterol. A sequence of further demethylations at C-4, involving the C-4 demethylation complex containing the C-4 methylsterol oxidases erg25A or erg25B, the sterol-4-alpha-carboxylate 3-dehydrogenase erg26 and the 3-keto-steroid reductase erg27, leads to the production of fecosterol via 4-methylfecosterol. The C-8 sterol isomerase erg2 then catalyzes the reaction which results in unsaturation at C-7 in the B ring of sterols and thus converts fecosterol to episterol. The sterol-C5-desaturase erg3B then catalyzes the introduction of a C-5 double bond in the B ring to produce 5-dehydroepisterol. The 2 other sterol-C5-desaturases, erg3A and erg3C, seem to be less important in ergosterol biosynthesis. The C-22 sterol desaturase erg5 further converts 5-dehydroepisterol into ergosta-5,7,22,24(28)-tetraen-3beta-ol by forming the C-22(23) double bond in the sterol side chain. Finally, ergosta-5,7,22,24(28)-tetraen-3beta-ol is substrate of the C-24(28) sterol reductases erg4A and erg4B to produce ergosterol. Possible alternative sterol biosynthetic pathways might exist from fecosterol to ergosterol, depending on the activities of the erg3 isoforms. This chain is Delta(7)-sterol 5(6)-desaturase erg3B, found in Aspergillus fumigatus (strain ATCC MYA-4609 / CBS 101355 / FGSC A1100 / Af293) (Neosartorya fumigata).